A 370-amino-acid polypeptide reads, in one-letter code: tRNA-specific 2-thiouridylase MnmA (370 aa).

Residues 7–14 and Met33 contribute to the ATP site; that span reads GISGGVDS. Residues 104-106 are interaction with target base in tRNA; it reads NPD. Cys109 functions as the Nucleophile in the catalytic mechanism. The cysteines at positions 109 and 208 are disulfide-linked. ATP is bound at residue Gly134. Residues 158–160 form an interaction with tRNA region; it reads KDQ. Residue Cys208 is the Cysteine persulfide intermediate of the active site.

It belongs to the MnmA/TRMU family.

It is found in the cytoplasm. The enzyme catalyses S-sulfanyl-L-cysteinyl-[protein] + uridine(34) in tRNA + AH2 + ATP = 2-thiouridine(34) in tRNA + L-cysteinyl-[protein] + A + AMP + diphosphate + H(+). Functionally, catalyzes the 2-thiolation of uridine at the wobble position (U34) of tRNA, leading to the formation of s(2)U34. In Malacoplasma penetrans (strain HF-2) (Mycoplasma penetrans), this protein is tRNA-specific 2-thiouridylase MnmA.